The primary structure comprises 313 residues: tRNA dimethylallyltransferase (313 aa).

11–18 (GPTACGKT) is an ATP binding site. Substrate is bound at residue 13 to 18 (TACGKT). Interaction with substrate tRNA stretches follow at residues 36–39 (DSAL), 160–164 (QRIER), and 243–248 (RCVGYR).

Belongs to the IPP transferase family. In terms of assembly, monomer. Mg(2+) serves as cofactor.

It carries out the reaction adenosine(37) in tRNA + dimethylallyl diphosphate = N(6)-dimethylallyladenosine(37) in tRNA + diphosphate. In terms of biological role, catalyzes the transfer of a dimethylallyl group onto the adenine at position 37 in tRNAs that read codons beginning with uridine, leading to the formation of N6-(dimethylallyl)adenosine (i(6)A). The protein is tRNA dimethylallyltransferase of Neisseria meningitidis serogroup C (strain 053442).